The chain runs to 626 residues: MPCVQAQYSPSPPGSSYAAQTYSSEYTTEIMNPDYTKLTMDLGSTEITATATTSLPSISTFVEGYSSNYELKPSCVYQMQRPLIKVEEGRAPSYHHHHHHHHHHHHHHQQQHQQPSIPPASSPEDEVLPSTSMYFKQSPPSTPTTPAFPPQAGALWDEALPSAPGCIAPGPLLDPPMKAVPTVAGARFPLFHFKPSPPHPPAPSPAGGHHLGYDPTAAAALSLPLGAAAAAGSQAAALESHPYGLPLAKRAAPLAFPPLGLTPSPTASSLLGESPSLPSPPSRSSSSGEGTCAVCGDNAACQHYGVRTCEGCKGFFKRTVQKNAKYVCLANKNCPVDKRRRNRCQYCRFQKCLSVGMVKEVVRTDSLKGRRGRLPSKPKSPLQQEPSQPSPPSPPICMMNALVRALTDSTPRDLDYSRYCPTDQAAAGTDAEHVQQFYNLLTASIDVSRSWAEKIPGFTDLPKEDQTLLIESAFLELFVLRLSIRSNTAEDKFVFCNGLVLHRLQCLRGFGEWLDSIKDFSLNLQSLNLDIQALACLSALSMITERHGLKEPKRVEELCNKITSSLKDHQSKGQALEPTESKVLGALVELRKICTLGLQRIFYLKLEDLVSPPSIIDKLFLDTLPF.

The interval 1–108 (MPCVQAQYSP…HHHHHHHHHH (108 aa)) is activation function (AF)-1 domain. The segment at 1-138 (MPCVQAQYSP…PSTSMYFKQS (138 aa)) is required for DNA-PK heterotrimer. Positions 1 to 291 (MPCVQAQYSP…SRSSSSGEGT (291 aa)) are interaction with NCOA1, NCOA2, NCOA3 and KAT2B. Disordered stretches follow at residues 92–152 (PSYH…PPQA), 192–211 (HFKP…GHHL), and 265–284 (PTAS…PSRS). Over residues 93 to 110 (SYHHHHHHHHHHHHHHQQ) the composition is skewed to basic residues. 2 stretches are compositionally biased toward pro residues: residues 140–149 (PSTPTTPAFP) and 195–204 (PSPPHPPAPS). Residues 268–284 (SSLLGESPSLPSPPSRS) show a composition bias toward low complexity. The segment at residues 289-364 (EGTCAVCGDN…VGMVKEVVRT (76 aa)) is a DNA-binding region (nuclear receptor). 2 NR C4-type zinc fingers span residues 292–312 (CAVC…CEGC) and 328–352 (CLAN…FQKC). The disordered stretch occupies residues 364-394 (TDSLKGRRGRLPSKPKSPLQQEPSQPSPPSP). Residues 377–387 (KPKSPLQQEPS) are compositionally biased toward low complexity. The tract at residues 379-626 (KSPLQQEPSQ…DKLFLDTLPF (248 aa)) is interaction with KAT2B. An NR LBD domain is found at 394-623 (PPICMMNALV…SIIDKLFLDT (230 aa)).

This sequence belongs to the nuclear hormone receptor family. NR4 subfamily. In terms of assembly, interacts with SIX3 (via homeobox); differentially regulates the transcriptional activities of NR4A3. Interacts with the constituents of DNA-PK heterotrimer PRKDC, XRCC6 and XRCC5; phosphorylates and prevents NR4A3 ubiquitinylation and degradation. Interacts with NCOA2; potentiates the activity of the NR4A3. Interacts with NCOA1, NCOA3, MED1 and KAT2B. Interacts with EP300 and NCOA2; mediates the recruitment of MED1 in the coactivator complex. Interacts with NR3C1 (via nuclear receptor DNA-binding domain); the interactions represses transcription activity of NR4A3 on the POMC promoter Nur response element (NurRE). Interacts with TRIM28; the interactions potentiates NR4A3 activity on NurRE promoter. Binds DNA as a monomer and homodimer. Interacts with PARP1; activates PARP1 by improving acetylation of PARP1 and suppressing the interaction between PARP1 and SIRT1. In terms of processing, phosphorylated by PRKDC. As to expression, isoform alpha is highly expressed in skeletal muscle. Isoform beta is highly expressed in skeletal muscle and low expressed in fetal brain and placenta.

It is found in the nucleus. Functionally, transcriptional activator that binds to regulatory elements in promoter regions in a cell- and response element (target)-specific manner. Induces gene expression by binding as monomers to the NR4A1 response element (NBRE) 5'-AAAAGGTCA-3' site and as homodimers to the Nur response element (NurRE) site in the promoter of their regulated target genes. Plays a role in the regulation of proliferation, survival and differentiation of many different cell types and also in metabolism and inflammation. Mediates proliferation of vascular smooth muscle, myeloid progenitor cell and type B pancreatic cells; promotes mitogen-induced vascular smooth muscle cell proliferation through transactivation of SKP2 promoter by binding a NBRE site. Upon PDGF stimulation, stimulates vascular smooth muscle cell proliferation by regulating CCND1 and CCND2 expression. In islets, induces type B pancreatic cell proliferation through up-regulation of genes that activate cell cycle, as well as genes that cause degradation of the CDKN1A. Negatively regulates myeloid progenitor cell proliferation by repressing RUNX1 in a NBRE site-independent manner. During inner ear, plays a role as a key mediator of the proliferative growth phase of semicircular canal development. Also mediates survival of neuron and smooth muscle cells; mediates CREB-induced neuronal survival, and during hippocampus development, plays a critical role in pyramidal cell survival and axonal guidance. Is required for S phase entry of the cell cycle and survival of smooth muscle cells by inducing CCND1, resulting in RB1 phosphorylation. Binds to NBRE motif in CCND1 promoter, resulting in the activation of the promoter and CCND1 transcription. Also plays a role in inflammation; upon TNF stimulation, mediates monocyte adhesion by inducing the expression of VCAM1 and ICAM1 by binding to the NBRE consensus site. In mast cells activated by Fc-epsilon receptor cross-linking, promotes the synthesis and release of cytokines but impairs events leading to degranulation. Also plays a role in metabolism; by modulating feeding behavior; and by playing a role in energy balance by inhibiting the glucocorticoid-induced orexigenic neuropeptides AGRP expression, at least in part by forming a complex with activated NR3C1 on the AGRP- glucocorticoid response element (GRE), and thus weakening the DNA binding activity of NR3C1. Upon catecholamines stimulation, regulates gene expression that controls oxidative metabolism in skeletal muscle. Plays a role in glucose transport by regulating translocation of the SLC2A4 glucose transporter to the cell surface. Finally, during gastrulation plays a crucial role in the formation of anterior mesoderm by controlling cell migration. Inhibits adipogenesis. Also participates in cardiac hypertrophy by activating PARP1. The sequence is that of Nuclear receptor subfamily 4 group A member 3 (NR4A3) from Homo sapiens (Human).